The chain runs to 466 residues: Soluble pyridine nucleotide transhydrogenase (466 aa).

36 to 45 (ERYQNVGGGC) contacts FAD.

It belongs to the class-I pyridine nucleotide-disulfide oxidoreductase family. It depends on FAD as a cofactor.

The protein localises to the cytoplasm. It catalyses the reaction NAD(+) + NADPH = NADH + NADP(+). In terms of biological role, conversion of NADPH, generated by peripheral catabolic pathways, to NADH, which can enter the respiratory chain for energy generation. This chain is Soluble pyridine nucleotide transhydrogenase, found in Escherichia coli O127:H6 (strain E2348/69 / EPEC).